The following is a 463-amino-acid chain: Exodeoxyribonuclease 7 large subunit (463 aa).

This sequence belongs to the XseA family. As to quaternary structure, heterooligomer composed of large and small subunits.

It localises to the cytoplasm. The enzyme catalyses Exonucleolytic cleavage in either 5'- to 3'- or 3'- to 5'-direction to yield nucleoside 5'-phosphates.. Functionally, bidirectionally degrades single-stranded DNA into large acid-insoluble oligonucleotides, which are then degraded further into small acid-soluble oligonucleotides. This Bordetella pertussis (strain Tohama I / ATCC BAA-589 / NCTC 13251) protein is Exodeoxyribonuclease 7 large subunit.